Reading from the N-terminus, the 465-residue chain is Asparagine--tRNA ligase (465 aa).

Belongs to the class-II aminoacyl-tRNA synthetase family. As to quaternary structure, homodimer.

It localises to the cytoplasm. It carries out the reaction tRNA(Asn) + L-asparagine + ATP = L-asparaginyl-tRNA(Asn) + AMP + diphosphate + H(+). The protein is Asparagine--tRNA ligase of Clostridium perfringens (strain SM101 / Type A).